Here is a 197-residue protein sequence, read N- to C-terminus: MERVNDSALNRLLTPLMRRVRLMLARAVVNVINDGRKVQNLQVGLLDDEESDEVERLQNYGHFSVPLPGAEALIACVGAQRDQGIAVVVEDRRYRPTNLEPGDAGIYHHEGHRIRLTKDGRCIITCKTVEVYADESMTVDTPRTTFTGDVEIQKGLGVKGKSQFDSNITAPDAIINGKSTDKHIHRGDSGGTTGPMQ.

The segment at 172-197 (DAIINGKSTDKHIHRGDSGGTTGPMQ) is disordered. The span at 179 to 188 (STDKHIHRGD) shows a compositional bias: basic and acidic residues. Fe cation is bound by residues His-183 and His-185. The Ca(2+) site is built by Asp-188 and Ser-189. Asp-188 is a chloride binding site.

Homotrimer. Part of a complex composed of three DNA circularization protein N, three baseplate hub protein gp44 and three sub-complex wedge (made of two copies of each baseplate protein gp46, gp47 and gp48) that forms the baseplate. It depends on Ca(2+) as a cofactor. Requires chloride as cofactor. Fe cation serves as cofactor.

The protein localises to the virion. Its subcellular location is the host cytoplasm. Functionally, component of the baseplate that forms a central needlelike spike used to puncture the host cell membrane for tube insertion during virus entry. Probably involved in baseplate and tail assembly. Serves as the distal plug of tail tube channel and might regulate the process of the phage DNA and protein ejection into the host cell. This chain is Baseplate puncturing device gp45, found in Escherichia phage Mu (Bacteriophage Mu).